A 59-amino-acid chain; its full sequence is UPF0434 protein Shewmr7_2490 (59 aa).

This sequence belongs to the UPF0434 family.

This chain is UPF0434 protein Shewmr7_2490, found in Shewanella sp. (strain MR-7).